Consider the following 273-residue polypeptide: 4-hydroxy-tetrahydrodipicolinate reductase (273 aa).

Residues 12–17 (GAGGRM) and glutamate 38 each bind NAD(+). An NADP(+)-binding site is contributed by arginine 39. Residues 102 to 104 (GTT) and 126 to 129 (AANF) each bind NAD(+). Histidine 159 acts as the Proton donor/acceptor in catalysis. Histidine 160 lines the (S)-2,3,4,5-tetrahydrodipicolinate pocket. Lysine 163 serves as the catalytic Proton donor. Residue 169–170 (GT) participates in (S)-2,3,4,5-tetrahydrodipicolinate binding.

The protein belongs to the DapB family. In terms of assembly, homotetramer.

The protein localises to the cytoplasm. It catalyses the reaction (S)-2,3,4,5-tetrahydrodipicolinate + NAD(+) + H2O = (2S,4S)-4-hydroxy-2,3,4,5-tetrahydrodipicolinate + NADH + H(+). The catalysed reaction is (S)-2,3,4,5-tetrahydrodipicolinate + NADP(+) + H2O = (2S,4S)-4-hydroxy-2,3,4,5-tetrahydrodipicolinate + NADPH + H(+). It participates in amino-acid biosynthesis; L-lysine biosynthesis via DAP pathway; (S)-tetrahydrodipicolinate from L-aspartate: step 4/4. In terms of biological role, catalyzes the conversion of 4-hydroxy-tetrahydrodipicolinate (HTPA) to tetrahydrodipicolinate. In Photorhabdus laumondii subsp. laumondii (strain DSM 15139 / CIP 105565 / TT01) (Photorhabdus luminescens subsp. laumondii), this protein is 4-hydroxy-tetrahydrodipicolinate reductase.